Reading from the N-terminus, the 301-residue chain is ATP synthase gamma chain (301 aa).

This sequence belongs to the ATPase gamma chain family. F-type ATPases have 2 components, CF(1) - the catalytic core - and CF(0) - the membrane proton channel. CF(1) has five subunits: alpha(3), beta(3), gamma(1), delta(1), epsilon(1). CF(0) has three main subunits: a, b and c.

The protein resides in the cell inner membrane. In terms of biological role, produces ATP from ADP in the presence of a proton gradient across the membrane. The gamma chain is believed to be important in regulating ATPase activity and the flow of protons through the CF(0) complex. The sequence is that of ATP synthase gamma chain from Helicobacter acinonychis (strain Sheeba).